Here is a 120-residue protein sequence, read N- to C-terminus: Protein RALF-like 1 (120 aa).

Residues 1–26 (MDKSFTLFLTLTILVVFIISSPPVQA) form the signal peptide. The propeptide at 27 to 71 (GFANDLGGVAWATTGDNGSGCHGSIAECIGAEEEEMDSEINRRIL) is removed in mature form. Residue Asn43 is glycosylated (N-linked (GlcNAc...) asparagine). Intrachain disulfides connect Cys89/Cys99 and Cys112/Cys118.

Belongs to the plant rapid alkalinization factor (RALF) family. As to quaternary structure, interacts with FER and promotes its phosphorylation and subsequent activation. In terms of processing, proteolytically cleaved, probably by S1P, a subtilisin-like serine protease (subtilase). As to expression, expressed in roots and stems.

The protein localises to the secreted. Functionally, cell signaling peptide that may regulate plant stress, growth, and development. Mediates a rapid alkalinization of extracellular space by mediating a transient increase in the cytoplasmic Ca(2+) concentration leading to a calcium-dependent signaling events through a cell surface receptor and a concomitant activation of some intracellular mitogen-activated protein kinases. Mostly active in roots. Prevents plant growth (e.g. root and leaf length). Suppresses cell elongation of the primary root by activating the cell surface receptor FER and triggering phosphorylation of AHA2 and subsequent extracellular alkalinization. The sequence is that of Protein RALF-like 1 (RALF1) from Arabidopsis thaliana (Mouse-ear cress).